The primary structure comprises 537 residues: Caspase recruitment domain-containing protein 8 (537 aa).

The span at 1 to 23 shows a compositional bias: basic and acidic residues; the sequence is MEKKECPEKSSSSEEELPRRDSG. Disordered stretches follow at residues 1-28 and 113-133; these read MEKKECPEKSSSSEEELPRRDSGSSRNI and GDIPSVSEEQESSEGQDSGDI. A ZU5 region spans residues 161–296; it reads FLGPEGNVDV…FYAVLESPSF (136 aa). Residues 161-446 enclose the FIIND domain; it reads FLGPEGNVDV…LQLVAASAPP (286 aa). The UPA stretch occupies residues 297-446; sequence SLMGILLRIA…LQLVAASAPP (150 aa). In terms of domain architecture, CARD spans 446–536; that stretch reads PPFSGAAFVK…YLVSYLRQQN (91 aa).

As to quaternary structure, interacts with DPP9; leading to inhibit activation of the inflammasome. DPP9 acts via formation of a ternary complex, composed of a DPP9 homodimer, one full-length CARD8 protein, and one cleaved C-terminus of CARD8 (Caspase recruitment domain-containing protein 8, C-terminus). Interacts with DPP8; leading to inhibit activation of the inflammasome, probably via formation of a ternary complex with DPP8. Interacts with NLRP3. Interacts with IKBKG/NEMO. Interacts with DRAL. Binds to caspase-1 (CASP1), CARD16/pseudo-ICE and CARD18/ICEBERG. Interacts with NLRP2 (via NACHT domain). In terms of assembly, interacts with the C-terminal part of CARD8 (Caspase recruitment domain-containing protein 8, C-terminus) in absence of pathogens and other damage-associated signals. Interacts with the N-terminal part of CARD8 (Caspase recruitment domain-containing protein 8, N-terminus) in absence of pathogens and other damage-associated signals. Homomultimer; forms the CARD8 inflammasome polymeric complex, a filament composed of homopolymers of this form in response to pathogens and other damage-associated signals. The CARD8 inflammasome polymeric complex directly recruits pro-caspase-1 (proCASP1) independently of PYCARD/ASC. Interacts (via CARD domain) with CASP1 (via CARD domain); leading to CASP1 activation. Undergoes autocatalytic processing within the FIIND domain to generate the N-terminal and C-terminal parts, which are associated non-covalently in absence of pathogens and other damage-associated signals. In terms of processing, ubiquitinated by the N-end rule pathway in response to pathogens and other damage-associated signals, leading to its degradation by the proteasome and subsequent release of the cleaved C-terminal part of the protein (Caspase recruitment domain-containing protein 8, C-terminus), which polymerizes and forms the CARD8 inflammasome. Post-translationally, (Microbial infection) Proteolytic cleavage by HIV-1 protease in the disordered region and within the ZU5 region of the FIIND domain promotes ubiquitination of the N-terminal part by the N-end rule pathway and degradation by the proteasome, releasing the cleaved C-terminal part of the protein (Caspase recruitment domain-containing protein 8, C-terminus), which polymerizes and forms the CARD8 inflammasome. Undergoes less autocatalytic processing within the FIIND domain compared to isoform 5. As to expression, high expression in lung, ovary, testis and placenta. Lower expression in heart, kidney and liver. Also expressed in spleen, lymph node and bone marrow.

It is found in the cytoplasm. It localises to the nucleus. Its subcellular location is the inflammasome. With respect to regulation, CARD8 inflammasome is activated by HIV-1 protease activity: HIV-1 protease cleaves CARD8, promoting ubiquitination and degradation of the N-terminal part, releasing the cleaved C-terminal part of the protein (Caspase recruitment domain-containing protein 8, C-terminus), which polymerizes and forms the CARD8 inflammasome. CARD8 inflammasome is inhibited by DPP8 and DPP9, which sequester the C-terminal fragment of CARD8 (Caspase recruitment domain-containing protein 8, C-terminus) in a ternary complex, thereby preventing CARD8 oligomerization and activation. CARD8 inflammasome is activated by Val-boroPro (Talabostat, PT-100), an inhibitor of dipeptidyl peptidases DPP8 and DPP9. Val-boroPro relieves inhibition of DPP8 and/or DPP9 by inducing the proteasome-mediated destruction of the N-terminal part of CARD8, releasing its C-terminal part from autoinhibition. Indirectly activated by the pseudodipeptide CQ31. CQ31 directly inactivates the peptidases PEPD and XPNPEP1, leading to an accumulation of dipeptides that weaky inhibit DDP8 and DPP9, relieving DPP8- and/or DPP9-mediated inhibition of CARD8. Inflammasome sensor, which mediates inflammasome activation in response to various pathogen-associated signals, leading to subsequent pyroptosis of CD4(+) T-cells and macrophages. Inflammasomes are supramolecular complexes that assemble in the cytosol in response to pathogens and other damage-associated signals and play critical roles in innate immunity and inflammation. Acts as a recognition receptor (PRR): recognizes specific pathogens and other damage-associated signals, such as HIV-1 protease activity or Val-boroPro inhibitor, and mediates CARD8 inflammasome activation. In response to pathogen-associated signals, the N-terminal part of CARD8 is degraded by the proteasome, releasing the cleaved C-terminal part of the protein (Caspase recruitment domain-containing protein 8, C-terminus), which polymerizes to initiate the formation of the inflammasome complex: the CARD8 inflammasome directly recruits pro-caspase-1 (proCASP1) independently of PYCARD/ASC and promotes caspase-1 (CASP1) activation, which subsequently cleaves and activates inflammatory cytokines IL1B and IL18 and gasdermin-D (GSDMD), leading to pyroptosis. Ability to sense HIV-1 protease activity leads to the clearance of latent HIV-1 in patient CD4(+) T-cells after viral reactivation; in contrast, HIV-1 can evade CARD8-sensing when its protease remains inactive in infected cells prior to viral budding. Also acts as a negative regulator of the NLRP3 inflammasome. May also act as an inhibitor of NF-kappa-B activation. In terms of biological role, constitutes the precursor of the CARD8 inflammasome, which mediates autoproteolytic processing within the FIIND domain to generate the N-terminal and C-terminal parts, which are associated non-covalently in absence of pathogens and other damage-associated signals. Functionally, regulatory part that prevents formation of the CARD8 inflammasome: in absence of pathogens and other damage-associated signals, interacts with the C-terminal part of CARD8 (Caspase recruitment domain-containing protein 8, C-terminus), preventing activation of the CARD8 inflammasome. In response to pathogen-associated signals, this part is ubiquitinated by the N-end rule pathway and degraded by the proteasome, releasing the cleaved C-terminal part of the protein, which polymerizes and forms the CARD8 inflammasome. Its function is as follows. Constitutes the active part of the CARD8 inflammasome. In absence of pathogens and other damage-associated signals, interacts with the N-terminal part of CARD8 (Caspase recruitment domain-containing protein 8, N-terminus), preventing activation of the CARD8 inflammasome. In response to pathogen-associated signals, the N-terminal part of CARD8 is degraded by the proteasome, releasing this form, which polymerizes to form the CARD8 inflammasome complex: the CARD8 inflammasome complex then directly recruits pro-caspase-1 (proCASP1) and promotes caspase-1 (CASP1) activation, leading to gasdermin-D (GSDMD) cleavage and subsequent pyroptosis. The sequence is that of Caspase recruitment domain-containing protein 8 from Homo sapiens (Human).